Reading from the N-terminus, the 666-residue chain is NADH-ubiquinone oxidoreductase chain 5 (666 aa).

17 consecutive transmembrane segments (helical) span residues 3–23 (LLILFLPLLGSLISGFGGRWL), 31–51 (FSTLCVVVSSLFSLLAFFEIG), 59–78 (IFLVSWIKSGAFYVSWGFLF), 82–101 (TVTMLVVITLVSSLVHIYSI), 119–139 (IFTFFMLILVTADNLIQMFLG), 168–190 (LIVNRVGDFGLSLGIFLIFWVFN), 211–231 (FLGFKLHVLTLISLFLFIGAI), 251–271 (TPVSALIHAATMVTAGVFLMI), 283–303 (ILFILITFGSLTAFFAAVTGV), 311–333 (VIAYSTCSQLGYMIFSCGMSCYD), 337–357 (FHLANHAFFKALLFLSAGSVI), 375–395 (FMPLTYSVMLIGTLALIGFPF), 421–441 (YISFACWLGTMSVFFTSFYSF), 467–487 (LLMIFPLIILSIGSIFAGYLI), 524–544 (WLPFILSLLGIFFASFVQIFL), 572–594 (VLYNRLIVLPILNFGYSISFKIL), and 629–649 (YLFFMIFTFCSFSIILVYSYI).

The protein belongs to the complex I subunit 5 family.

It is found in the mitochondrion inner membrane. The catalysed reaction is a ubiquinone + NADH + 5 H(+)(in) = a ubiquinol + NAD(+) + 4 H(+)(out). Core subunit of the mitochondrial membrane respiratory chain NADH dehydrogenase (Complex I) that is believed to belong to the minimal assembly required for catalysis. Complex I functions in the transfer of electrons from NADH to the respiratory chain. The immediate electron acceptor for the enzyme is believed to be ubiquinone. The protein is NADH-ubiquinone oxidoreductase chain 5 (ND5) of Chondrus crispus (Carrageen Irish moss).